Reading from the N-terminus, the 298-residue chain is uncharacterized protein (298 aa).

Active-site charge relay system residues include threonine 43 and tyrosine 105. Tyrosine 131 (proton donor) is an active-site residue. Residue lysine 159 is the Schiff-base intermediate with substrate of the active site.

Belongs to the DapA family. Homotetramer.

The protein localises to the cytoplasm. This is an uncharacterized protein from Pyrococcus furiosus (strain ATCC 43587 / DSM 3638 / JCM 8422 / Vc1).